Consider the following 247-residue polypeptide: Aliphatic sulfonates import ATP-binding protein SsuB 1 (247 aa).

Residues 7–222 (LSLSGVHKSF…KRSSYEFVET (216 aa)) enclose the ABC transporter domain. ATP is bound at residue 39–46 (GKSGCGKS).

This sequence belongs to the ABC transporter superfamily. Aliphatic sulfonates importer (TC 3.A.1.17.2) family. As to quaternary structure, the complex is composed of two ATP-binding proteins (SsuB), two transmembrane proteins (SsuC) and a solute-binding protein (SsuA).

It is found in the cell membrane. It catalyses the reaction ATP + H2O + aliphatic sulfonate-[sulfonate-binding protein]Side 1 = ADP + phosphate + aliphatic sulfonateSide 2 + [sulfonate-binding protein]Side 1.. Part of the ABC transporter complex SsuABC involved in aliphatic sulfonates import. Responsible for energy coupling to the transport system. This Shouchella clausii (strain KSM-K16) (Alkalihalobacillus clausii) protein is Aliphatic sulfonates import ATP-binding protein SsuB 1.